The following is a 617-amino-acid chain: Hemagglutinin glycoprotein (617 aa).

Residues 1 to 37 are Intravirion-facing; sequence MSPQRDRINAFYKDNPHPKGSRIVINREHLMIDRPYV. Residues 1–154 form a stalk region; that stretch reads MSPQRDRINA…RIKLDYDQYC (154 aa). The chain crosses the membrane as a helical; Signal-anchor for type II membrane protein span at residues 38–58; that stretch reads LLAVLFVMFLSLIGLLAIAGI. The Virion surface segment spans residues 59–617; that stretch reads RLHRAAIYTA…VTREDGTNRR (559 aa). N-linked (GlcNAc...) asparagine; by host glycosylation is found at N168, N187, N200, N215, and N238. 5 disulfide bridges follow: C188–C606, C287–C300, C381–C494, C386–C394, and C570–C579. An interaction with host NECTIN4 receptor region spans residues 458 to 543; that stretch reads PMKNLALGVI…VEHAVVYYVY (86 aa).

The protein belongs to the paramyxoviruses hemagglutinin-neuraminidase family. Non-sialidase subfamily. Homodimer; disulfide-linked. Further forms homotetramer (dimer of dimers). Interacts (via C-terminus) with human NECTIN4 (via N-terminus); this interaction allows attachment to the respiratory epithelium and viral entry. Interacts (via C-terminus) with human SLAMF1/CD150 (via N-terminus); this interaction allows attachment and viral entry into the CD150-expressing immune cells. Interacts with human CD46 antigen.

It localises to the virion membrane. It is found in the host cell membrane. Its function is as follows. Attaches the virus to the human SLAMF1/CD150 receptor for entry into host dendritic cells, macrophages, activated memory T cells and naive or memory B cells, thereby explaining the long immunosuppression that follows infection. In the respiratory airways, binds to the NECTIN4 receptor for entry into the host cell. Binding of H protein to the receptor induces a conformational change that allows the F protein to trigger virion/cell membranes fusion. The vaccine and laboratory-adapted strains use host CD46 as an alternate receptor. The high degree of interaction between H and CD46 results in down-regulation of the latter from the surface of infected cells, rendering them more sensitive to c3b-mediated complement lysis. This Homo sapiens (Human) protein is Hemagglutinin glycoprotein (H).